The chain runs to 1066 residues: Isoleucine--tRNA ligase (1066 aa).

Residues 49-59 carry the 'HIGH' region motif; sequence PYVSGAIHLGT. The 'KMSKS' region motif lies at 625-629; sequence KMSKS. ATP is bound at residue Lys628.

The protein belongs to the class-I aminoacyl-tRNA synthetase family. IleS type 2 subfamily. In terms of assembly, monomer. Zn(2+) is required as a cofactor.

It localises to the cytoplasm. It catalyses the reaction tRNA(Ile) + L-isoleucine + ATP = L-isoleucyl-tRNA(Ile) + AMP + diphosphate. Its function is as follows. Catalyzes the attachment of isoleucine to tRNA(Ile). As IleRS can inadvertently accommodate and process structurally similar amino acids such as valine, to avoid such errors it has two additional distinct tRNA(Ile)-dependent editing activities. One activity is designated as 'pretransfer' editing and involves the hydrolysis of activated Val-AMP. The other activity is designated 'posttransfer' editing and involves deacylation of mischarged Val-tRNA(Ile). This is Isoleucine--tRNA ligase from Pyrococcus horikoshii (strain ATCC 700860 / DSM 12428 / JCM 9974 / NBRC 100139 / OT-3).